Reading from the N-terminus, the 1074-residue chain is Probable arabinosyltransferase C (1074 aa).

The next 10 helical transmembrane spans lie at 15-37, 214-236, 251-273, 415-437, 452-474, 516-538, 573-595, 608-630, 645-667, and 684-706; these read ARLV…PLLP, LLKL…ALHV, SRWW…WHFV, IIIG…ALLV, RFGY…FLIF, SVAR…AMTL, THQF…VAVT, FGAA…WYVS, FGFT…WFHF, and LLVA…SLTL.

It belongs to the emb family.

The protein resides in the cell membrane. Arabinosyl transferase responsible for the polymerization of arabinose into the arabinan of arabinogalactan. This chain is Probable arabinosyltransferase C (embC), found in Mycolicibacterium smegmatis (Mycobacterium smegmatis).